The primary structure comprises 117 residues: Protein YchN (117 aa).

It to M.jannaschii MJ0989. In terms of assembly, homohexamer. The hexamer is formed by a dimer of trimers.

This Escherichia coli O157:H7 protein is Protein YchN (ychN).